Consider the following 1183-residue polypeptide: Spermatogenesis-associated protein 31G1 (1183 aa).

Disordered regions lie at residues 109-153 (TPIG…FPTF), 469-555 (LMPA…SPWA), 661-686 (TVDD…SSEP), 843-884 (ASQG…VSEV), 973-1032 (CLHS…TGLL), and 1048-1087 (QKRG…PAEA). The span at 124–134 (CRSEGRPRATE) shows a compositional bias: basic and acidic residues. Over residues 135–153 (TQEQVLIQSPSPSRSFPTF) the composition is skewed to polar residues. Positions 487–509 (NPKERLSAPKDVRENLGYREHPH) are enriched in basic and acidic residues. Over residues 671–685 (TGKNTDNTKKCSSSE) the composition is skewed to polar residues. Over residues 847–858 (PNPPAVNPPQPT) the composition is skewed to pro residues. Positions 975–984 (HSSSQPQAQA) are enriched in polar residues. Residues 993–1002 (QKSKRLKRKA) are compositionally biased toward basic residues. Polar residues predominate over residues 1069–1079 (SPTNTRENNPA).

Expressed in kidney and testis. Expressed at lower levels in stomach, intestine, epididymis and ovary. Expressed at very low levels in heart and spleen.

Dispensable for normal development and fertility. The sequence is that of Spermatogenesis-associated protein 31G1 (Spata31g1) from Mus musculus (Mouse).